Consider the following 1295-residue polypeptide: Phosphoribosylformylglycinamidine synthase (1295 aa).

ATP-binding positions include 305–316 (GAATGSGGEIRD), 384–386 (TGY), and Ala676. Residues Asp677, Glu716, Asn720, and Asp884 each coordinate Mg(2+). An ATP-binding site is contributed by Ser886. One can recognise a Glutamine amidotransferase type-1 domain in the interval 1042–1295 (VAILREQGVN…MFRNARKHLG (254 aa)). Cys1135 functions as the Nucleophile in the catalytic mechanism. Residues His1260 and Glu1262 contribute to the active site.

This sequence in the N-terminal section; belongs to the FGAMS family. Monomer.

It is found in the cytoplasm. The enzyme catalyses N(2)-formyl-N(1)-(5-phospho-beta-D-ribosyl)glycinamide + L-glutamine + ATP + H2O = 2-formamido-N(1)-(5-O-phospho-beta-D-ribosyl)acetamidine + L-glutamate + ADP + phosphate + H(+). Its pathway is purine metabolism; IMP biosynthesis via de novo pathway; 5-amino-1-(5-phospho-D-ribosyl)imidazole from N(2)-formyl-N(1)-(5-phospho-D-ribosyl)glycinamide: step 1/2. In terms of biological role, phosphoribosylformylglycinamidine synthase involved in the purines biosynthetic pathway. Catalyzes the ATP-dependent conversion of formylglycinamide ribonucleotide (FGAR) and glutamine to yield formylglycinamidine ribonucleotide (FGAM) and glutamate. The chain is Phosphoribosylformylglycinamidine synthase from Idiomarina loihiensis (strain ATCC BAA-735 / DSM 15497 / L2-TR).